The following is a 302-amino-acid chain: Pyridoxal 5'-phosphate synthase subunit PdxS (302 aa).

D-ribose 5-phosphate is bound at residue Asp-32. The active-site Schiff-base intermediate with D-ribose 5-phosphate is Lys-89. A D-ribose 5-phosphate-binding site is contributed by Gly-161. Position 173 (Arg-173) interacts with D-glyceraldehyde 3-phosphate. D-ribose 5-phosphate contacts are provided by residues Gly-222 and 243–244 (GS). A disordered region spans residues 276–302 (ASNPGKGMKGEANADLSEGEKLQTRGV). Positions 293 to 302 (EGEKLQTRGV) are enriched in basic and acidic residues.

It belongs to the PdxS/SNZ family. As to quaternary structure, in the presence of PdxT, forms a dodecamer of heterodimers.

It catalyses the reaction aldehydo-D-ribose 5-phosphate + D-glyceraldehyde 3-phosphate + L-glutamine = pyridoxal 5'-phosphate + L-glutamate + phosphate + 3 H2O + H(+). Its pathway is cofactor biosynthesis; pyridoxal 5'-phosphate biosynthesis. In terms of biological role, catalyzes the formation of pyridoxal 5'-phosphate from ribose 5-phosphate (RBP), glyceraldehyde 3-phosphate (G3P) and ammonia. The ammonia is provided by the PdxT subunit. Can also use ribulose 5-phosphate and dihydroxyacetone phosphate as substrates, resulting from enzyme-catalyzed isomerization of RBP and G3P, respectively. In Haloquadratum walsbyi (strain DSM 16790 / HBSQ001), this protein is Pyridoxal 5'-phosphate synthase subunit PdxS.